Here is a 549-residue protein sequence, read N- to C-terminus: Glutamyl-tRNA(Gln) amidotransferase subunit B, mitochondrial (549 aa).

Residues 1-23 (MLRISRDTKIVARVTHVTKSRTY) constitute a mitochondrion transit peptide.

The protein belongs to the GatB/GatE family. GatB subfamily. In terms of assembly, subunit of the heterotrimeric GatFAB amidotransferase (AdT) complex, composed of A, B and F subunits.

It is found in the mitochondrion. The catalysed reaction is L-glutamyl-tRNA(Gln) + L-glutamine + ATP + H2O = L-glutaminyl-tRNA(Gln) + L-glutamate + ADP + phosphate + H(+). Allows the formation of correctly charged Gln-tRNA(Gln) through the transamidation of misacylated Glu-tRNA(Gln) in the mitochondria. The reaction takes place in the presence of glutamine and ATP through an activated gamma-phospho-Glu-tRNA(Gln). The protein is Glutamyl-tRNA(Gln) amidotransferase subunit B, mitochondrial of Yarrowia lipolytica (strain CLIB 122 / E 150) (Yeast).